The primary structure comprises 359 residues: DNA replication and repair protein RecF (359 aa).

Residue 30 to 37 (GPNGSGKT) participates in ATP binding.

It belongs to the RecF family.

It localises to the cytoplasm. Its function is as follows. The RecF protein is involved in DNA metabolism; it is required for DNA replication and normal SOS inducibility. RecF binds preferentially to single-stranded, linear DNA. It also seems to bind ATP. The sequence is that of DNA replication and repair protein RecF from Vibrio vulnificus (strain CMCP6).